Reading from the N-terminus, the 366-residue chain is Galactoside alpha-(1,2)-fucosyltransferase 1 (366 aa).

Topologically, residues 1–8 are cytoplasmic; sequence MWPLSHRH. A helical; Signal-anchor for type II membrane protein membrane pass occupies residues 9–25; that stretch reads LCLAFLLVCVLSAISFF. Residues 26–366 lie on the Lumenal side of the membrane; the sequence is LHIHQDSFRH…LSPLWTLAEP (341 aa). N-linked (GlcNAc...) asparagine glycosylation is found at Asn66, Asn302, and Asn328.

The protein belongs to the glycosyltransferase 11 family.

The protein localises to the golgi apparatus. The protein resides in the golgi stack membrane. The enzyme catalyses a beta-D-galactosyl-(1-&gt;4)-N-acetyl-beta-D-glucosaminyl derivative + GDP-beta-L-fucose = an alpha-L-Fuc-(1-&gt;2)-beta-D-Gal-(1-&gt;4)-beta-D-GlcNAc derivative + GDP + H(+). The catalysed reaction is a ganglioside GA1 + GDP-beta-L-fucose = a ganglioside Fuc-GA1 + GDP + H(+). It catalyses the reaction a beta-D-Gal-(1-&gt;3)-beta-D-GlcNAc-(1-&gt;3)-beta-D-Gal-(1-&gt;4)-beta-D-Glc-(1&lt;-&gt;1')-Cer(d18:1(4E)) + GDP-beta-L-fucose = alpha-L-fucosyl-(1-&gt;2)- beta-D-galactosyl-(1-&gt;3)-N-acetyl-beta-D-glucosaminyl-(1-&gt;3)-beta-D-galactosyl-(1-&gt;4)-beta-D-glucosyl-(1&lt;-&gt;1')-N-acylsphing-4-enine + GDP + H(+). It carries out the reaction a neolactoside nLc4Cer(d18:1(4E)) + GDP-beta-L-fucose = a neolactoside IV(2)-alpha-Fuc-nLc4Cer(d18:1(4E)) + GDP + H(+). The enzyme catalyses a ganglioside GM1 + GDP-beta-L-fucose = a ganglioside Fuc-GM1 + GDP + H(+). The catalysed reaction is beta-D-galactosyl-(1-&gt;3)-N-acetyl-D-galactosamine + GDP-beta-L-fucose = alpha-L-fucosyl-(1-&gt;2)-beta-D-galactosyl-(1-&gt;3)-N-acetyl-D-galactosamine + GDP + H(+). The protein operates within protein modification; protein glycosylation. Catalyzes the transfer of L-fucose, from a guanosine diphosphate-beta-L-fucose, to the terminal galactose residue of glycoconjugates through an alpha(1,2) linkage leading to H antigen synthesis that is an intermediate substrate in the synthesis of ABO blood group antigens. H antigen is essential for maturation of the glomerular layer of the main olfactory bulb, in cell migration and early cell-cell contacts during tumor associated angiogenesis. Preferentially fucosylates soluble lactose and to a lesser extent fucosylates glycolipids gangliosides GA1 and GM1a. The polypeptide is Galactoside alpha-(1,2)-fucosyltransferase 1 (Ateles belzebuth (White-bellied spider monkey)).